We begin with the raw amino-acid sequence, 162 residues long: NADH-quinone oxidoreductase subunit I (162 aa).

4Fe-4S ferredoxin-type domains are found at residues 52–82 (LRRY…IEAG) and 93–122 (VRYD…EGPN). The [4Fe-4S] cluster site is built by Cys62, Cys65, Cys68, Cys72, Cys102, Cys105, Cys108, and Cys112.

The protein belongs to the complex I 23 kDa subunit family. NDH-1 is composed of 14 different subunits. Subunits NuoA, H, J, K, L, M, N constitute the membrane sector of the complex. It depends on [4Fe-4S] cluster as a cofactor.

It is found in the cell inner membrane. The enzyme catalyses a quinone + NADH + 5 H(+)(in) = a quinol + NAD(+) + 4 H(+)(out). Its function is as follows. NDH-1 shuttles electrons from NADH, via FMN and iron-sulfur (Fe-S) centers, to quinones in the respiratory chain. The immediate electron acceptor for the enzyme in this species is believed to be ubiquinone. Couples the redox reaction to proton translocation (for every two electrons transferred, four hydrogen ions are translocated across the cytoplasmic membrane), and thus conserves the redox energy in a proton gradient. This is NADH-quinone oxidoreductase subunit I from Bradyrhizobium sp. (strain BTAi1 / ATCC BAA-1182).